The chain runs to 76 residues: Transcription modulator YdgT (76 aa).

Belongs to the Hha/YmoA/Cnu family.

In terms of biological role, binds to H-NS and modifies the range of genes it silences; H-NS alone silences 'core' genes while the H-NS-Hha complex (and presumably also H-NS-YdgT) silences genes acquired by horizontal gene transfer. Plays a role silencing virulence factors in the absence of factors that induce pathogenicity. The sequence is that of Transcription modulator YdgT (ydgT) from Salmonella typhimurium (strain SL1344).